Consider the following 82-residue polypeptide: Small ribosomal subunit protein bS18 (82 aa).

Belongs to the bacterial ribosomal protein bS18 family. In terms of assembly, part of the 30S ribosomal subunit. Forms a tight heterodimer with protein bS6.

Functionally, binds as a heterodimer with protein bS6 to the central domain of the 16S rRNA, where it helps stabilize the platform of the 30S subunit. The chain is Small ribosomal subunit protein bS18 from Bartonella bacilliformis (strain ATCC 35685 / KC583 / Herrer 020/F12,63).